A 325-amino-acid chain; its full sequence is Inactive S-adenosylmethionine decarboxylase prozyme (325 aa).

This sequence belongs to the eukaryotic AdoMetDC family. As to quaternary structure, forms a heterodimer with S-adenosylmethionine decarboxylase AdoMetDC; heterodimerization is required to activate AdoMetDC.

The protein operates within amine and polyamine biosynthesis; S-adenosylmethioninamine biosynthesis; S-adenosylmethioninamine from S-adenosyl-L-methionine: step 1/1. Probably has no catalytic activity due to the loss of several residues required for processing and catalysis. Forms a complex with S-adenosylmethionine decarboxylase AdoMetDC which is essential to activate AdoMetDC. Required for the biosynthesis of the polyamine spermidine. Required for growth and survival during the bloodstream life cycle stage. This is Inactive S-adenosylmethionine decarboxylase prozyme from Trypanosoma brucei brucei.